The sequence spans 336 residues: Glyceraldehyde-3-phosphate dehydrogenase (336 aa).

Residues 12-13, Asp-34, and Arg-79 each bind NAD(+); that span reads RI. Residues 150–152, Thr-181, 210–211, and Arg-233 each bind D-glyceraldehyde 3-phosphate; these read SCT and TG. Catalysis depends on Cys-151, which acts as the Nucleophile. Position 315 (Asn-315) interacts with NAD(+).

The protein belongs to the glyceraldehyde-3-phosphate dehydrogenase family. In terms of assembly, homotetramer.

It localises to the cytoplasm. It carries out the reaction D-glyceraldehyde 3-phosphate + phosphate + NAD(+) = (2R)-3-phospho-glyceroyl phosphate + NADH + H(+). It functions in the pathway carbohydrate degradation; glycolysis; pyruvate from D-glyceraldehyde 3-phosphate: step 1/5. In Aspergillus niger, this protein is Glyceraldehyde-3-phosphate dehydrogenase (gpdA).